Here is a 90-residue protein sequence, read N- to C-terminus: DNA-directed RNA polymerase subunit omega (90 aa).

This sequence belongs to the RNA polymerase subunit omega family. As to quaternary structure, the RNAP catalytic core consists of 2 alpha, 1 beta, 1 beta' and 1 omega subunit. When a sigma factor is associated with the core the holoenzyme is formed, which can initiate transcription.

It carries out the reaction RNA(n) + a ribonucleoside 5'-triphosphate = RNA(n+1) + diphosphate. Promotes RNA polymerase assembly. Latches the N- and C-terminal regions of the beta' subunit thereby facilitating its interaction with the beta and alpha subunits. This chain is DNA-directed RNA polymerase subunit omega, found in Saccharophagus degradans (strain 2-40 / ATCC 43961 / DSM 17024).